Here is a 250-residue protein sequence, read N- to C-terminus: MKVVAQEEIAPAIFELVLEGEMVEAMRAGQFLHLRVPDDAHLLRRPISISSIDKANKQCHLIYRIDGAGTAIFSTLSQGDTLDVMGPQGNGFDLSDLDEQNQVLLVGGGIGVPPLLEVAKELHERGVKVVTVLGFANKDAVILKTELAQYGQVFVTTDDGSYGIKGNVSVVINDLDSQFDAVYSCGAPGMMKYINQTFDDHPRAYLSLESRMACGMGACYACVLKVPENETVSQRVCEDGPVFRTGTVVL.

An FAD-binding FR-type domain is found at 1 to 94 (MKVVAQEEIA…MGPQGNGFDL (94 aa)). FAD is bound by residues 45-48 (RPIS), 62-64 (IYR), and 69-70 (GT). Positions 214, 219, 222, and 237 each coordinate [2Fe-2S] cluster.

The protein belongs to the PyrK family. As to quaternary structure, heterotetramer of 2 PyrK and 2 PyrD type B subunits. It depends on [2Fe-2S] cluster as a cofactor. FAD is required as a cofactor.

The protein operates within pyrimidine metabolism; UMP biosynthesis via de novo pathway; orotate from (S)-dihydroorotate (NAD(+) route): step 1/1. Responsible for channeling the electrons from the oxidation of dihydroorotate from the FMN redox center in the PyrD type B subunit to the ultimate electron acceptor NAD(+). The chain is Dihydroorotate dehydrogenase B (NAD(+)), electron transfer subunit from Streptococcus pneumoniae serotype 4 (strain ATCC BAA-334 / TIGR4).